Consider the following 102-residue polypeptide: Large ribosomal subunit protein bL21 (102 aa).

It belongs to the bacterial ribosomal protein bL21 family. Part of the 50S ribosomal subunit. Contacts protein L20.

Functionally, this protein binds to 23S rRNA in the presence of protein L20. This is Large ribosomal subunit protein bL21 from Geobacter metallireducens (strain ATCC 53774 / DSM 7210 / GS-15).